Here is a 235-residue protein sequence, read N- to C-terminus: Ubiquinone biosynthesis O-methyltransferase (235 aa).

S-adenosyl-L-methionine is bound by residues Arg-40, Gly-60, Asp-81, and Met-125.

It belongs to the methyltransferase superfamily. UbiG/COQ3 family.

The catalysed reaction is a 3-demethylubiquinol + S-adenosyl-L-methionine = a ubiquinol + S-adenosyl-L-homocysteine + H(+). It catalyses the reaction a 3-(all-trans-polyprenyl)benzene-1,2-diol + S-adenosyl-L-methionine = a 2-methoxy-6-(all-trans-polyprenyl)phenol + S-adenosyl-L-homocysteine + H(+). It participates in cofactor biosynthesis; ubiquinone biosynthesis. O-methyltransferase that catalyzes the 2 O-methylation steps in the ubiquinone biosynthetic pathway. The protein is Ubiquinone biosynthesis O-methyltransferase of Nitrosomonas europaea (strain ATCC 19718 / CIP 103999 / KCTC 2705 / NBRC 14298).